Here is a 1171-residue protein sequence, read N- to C-terminus: Myosin-B/C (1171 aa).

The region spanning glutamate 105 to arginine 780 is the Myosin motor domain. Glycine 199–threonine 206 contributes to the ATP binding site. The interval alanine 671–glutamate 681 is actin-binding. Residues isoleucine 810–proline 1171 are tail.

This sequence belongs to the TRAFAC class myosin-kinesin ATPase superfamily. Myosin family.

The protein localises to the cytoplasm. Functionally, myosins are actin-based motor molecules with ATPase activity. Unconventional myosins serve in intracellular movements. Their highly divergent tails are presumed to bind to membranous compartments, which would be moved relative to actin filaments. Plays a role in proper daughter cell budding and separation. This Toxoplasma gondii protein is Myosin-B/C.